A 520-amino-acid polypeptide reads, in one-letter code: Dihydropyrimidinase 2 (520 aa).

Residues H59, H61, and K152 each coordinate Zn(2+). The residue at position 152 (K152) is an N6-carboxylysine. Substrate is bound at residue Y157. Zn(2+) contacts are provided by H185 and H241. S291 contributes to the substrate binding site. D319 serves as a coordination point for Zn(2+). N340 serves as a coordination point for substrate.

It belongs to the metallo-dependent hydrolases superfamily. Hydantoinase/dihydropyrimidinase family. Homotetramer. Zn(2+) serves as cofactor. In terms of processing, carboxylation allows a single lysine to coordinate two zinc ions. In terms of tissue distribution, body wall muscles.

It carries out the reaction 5,6-dihydrouracil + H2O = 3-(carbamoylamino)propanoate + H(+). This chain is Dihydropyrimidinase 2 (dhp-2), found in Caenorhabditis elegans.